The primary structure comprises 732 residues: Anthranilate synthase (732 aa).

The Glutamine amidotransferase type-1 domain maps to 533 to 728 (RVLLVDHDDS…MDRLAAGALT (196 aa)). 583 to 585 (GPG) is a binding site for L-glutamine. Cys610 (nucleophile; for GATase activity) is an active-site residue. L-glutamine-binding positions include Gln614 and 660–661 (SL). Catalysis depends on for GATase activity residues His699 and Glu701.

It carries out the reaction chorismate + L-glutamine = anthranilate + pyruvate + L-glutamate + H(+). It functions in the pathway amino-acid biosynthesis; L-tryptophan biosynthesis; L-tryptophan from chorismate: step 1/5. The polypeptide is Anthranilate synthase (trpE(G)) (Azospirillum brasilense).